The chain runs to 213 residues: Na(+)-translocating NADH-quinone reductase subunit D (213 aa).

7 helical membrane-spanning segments follow: residues P21–A41, L42–L62, I77–I97, L101–L121, F131–I151, E153–S173, and F183–V203.

The protein belongs to the NqrDE/RnfAE family. As to quaternary structure, composed of six subunits; NqrA, NqrB, NqrC, NqrD, NqrE and NqrF.

Its subcellular location is the cell inner membrane. It carries out the reaction a ubiquinone + n Na(+)(in) + NADH + H(+) = a ubiquinol + n Na(+)(out) + NAD(+). Its function is as follows. NQR complex catalyzes the reduction of ubiquinone-1 to ubiquinol by two successive reactions, coupled with the transport of Na(+) ions from the cytoplasm to the periplasm. NqrA to NqrE are probably involved in the second step, the conversion of ubisemiquinone to ubiquinol. The protein is Na(+)-translocating NADH-quinone reductase subunit D of Chlamydia abortus (strain DSM 27085 / S26/3) (Chlamydophila abortus).